We begin with the raw amino-acid sequence, 343 residues long: Cytoplasmic tRNA 2-thiolation protein 1 (343 aa).

It belongs to the TtcA family. CTU1/NCS6/ATPBD3 subfamily.

Its subcellular location is the cytoplasm. It functions in the pathway tRNA modification; 5-methoxycarbonylmethyl-2-thiouridine-tRNA biosynthesis. Plays a central role in 2-thiolation of mcm(5)S(2)U at tRNA wobble positions of tRNA(Lys), tRNA(Glu) and tRNA(Gln). Directly binds tRNAs and probably acts by catalyzing adenylation of tRNAs, an intermediate required for 2-thiolation. It is unclear whether it acts as a sulfurtransferase that transfers sulfur from thiocarboxylated URM1 onto the uridine of tRNAs at wobble position. This Drosophila erecta (Fruit fly) protein is Cytoplasmic tRNA 2-thiolation protein 1.